The primary structure comprises 282 residues: Bacterial lipoprotein FTN_1103 (282 aa).

Positions 1-28 (MKYGNLMMTKKKLLIGMVTISGIVILGS) are cleaved as a signal peptide. A lipid anchor (N-palmitoyl cysteine) is attached at Cys29. Residue Cys29 is the site of S-diacylglycerol cysteine attachment.

Its subcellular location is the cell membrane. Stimulates the host immune inflammatory signaling system allowing the host to combat the bacteria. Stimulates mouse interleukin-6 (Il6) production. The polypeptide is Bacterial lipoprotein FTN_1103 (Francisella tularensis subsp. novicida (strain U112)).